The following is a 153-amino-acid chain: Ribosome maturation factor RimP (153 aa).

It belongs to the RimP family.

Its subcellular location is the cytoplasm. Required for maturation of 30S ribosomal subunits. This chain is Ribosome maturation factor RimP, found in Coxiella burnetii (strain Dugway 5J108-111).